Reading from the N-terminus, the 105-residue chain is Circadian clock oscillator protein KaiB (105 aa).

It belongs to the KaiB family. As to quaternary structure, may undergo a major conformational rearrangment; in the free state forms homooligomers. When bound to KaiC switches to a monomeric thioredoxin-fold (KaiB(fs)). The active oscillator complex is probably KaiC(6):KaiB(6).

Functionally, component of the KaiBC clock protein complex, which constitutes the main circadian regulator in cyanobacteria; it may modify the ATPase activity of KaiC. In terms of biological role, may be a metamorphic protein which reversibly switches between an inactive tetrameric fold and a rare, thioredoxin-like monomeric fold (KaiB(fs)). KaiB(fs) binds phospho-KaiC, and perhaps clock output effectors. The protein is Circadian clock oscillator protein KaiB of Prochlorococcus marinus (strain MIT 9312).